The chain runs to 27 residues: Caerulein precursor fragment R5 (27 aa).

In terms of tissue distribution, expressed by the skin glands.

It is found in the secreted. Antimicrobial peptide. The chain is Caerulein precursor fragment R5 from Xenopus ruwenzoriensis (Uganda clawed frog).